A 279-amino-acid chain; its full sequence is Cytochrome c1 (279 aa).

The signal sequence occupies residues 1-21 (MKKLLISAVSALVLGSGAAFA). Residues C55, C58, H59, and M204 each contribute to the heme c site. A helical membrane pass occupies residues 248 to 266 (MGLVAMVMLGLLSVMLYLT).

In terms of assembly, the main subunits of complex b-c1 are: cytochrome b, cytochrome c1 and the Rieske protein. Binds 1 heme c group covalently per subunit.

The protein resides in the cell membrane. Functionally, component of the ubiquinol-cytochrome c reductase complex (complex III or cytochrome b-c1 complex), which is a respiratory chain that generates an electrochemical potential coupled to ATP synthesis. c1 functions as an electron donor to cytochrome c. This Rhodobacter capsulatus (strain ATCC BAA-309 / NBRC 16581 / SB1003) protein is Cytochrome c1 (petC).